A 321-amino-acid polypeptide reads, in one-letter code: tRNA-dihydrouridine synthase B (321 aa).

FMN contacts are provided by residues 16–18 (PMA) and Gln70. The Proton donor role is filled by Cys100. FMN-binding positions include Lys139, 200–202 (NGD), and 224–225 (GR).

The protein belongs to the Dus family. DusB subfamily. FMN serves as cofactor.

It carries out the reaction a 5,6-dihydrouridine in tRNA + NAD(+) = a uridine in tRNA + NADH + H(+). The enzyme catalyses a 5,6-dihydrouridine in tRNA + NADP(+) = a uridine in tRNA + NADPH + H(+). Its function is as follows. Catalyzes the synthesis of 5,6-dihydrouridine (D), a modified base found in the D-loop of most tRNAs, via the reduction of the C5-C6 double bond in target uridines. The sequence is that of tRNA-dihydrouridine synthase B from Pectobacterium carotovorum (Erwinia carotovora).